A 264-amino-acid chain; its full sequence is Thymidylate synthase (264 aa).

R21 is a binding site for dUMP. H51 is a (6R)-5,10-methylene-5,6,7,8-tetrahydrofolate binding site. 126 to 127 (RR) is a binding site for dUMP. Residue C146 is the Nucleophile of the active site. DUMP is bound by residues 166–169 (RSAD), N177, and 207–209 (HLY). Position 169 (D169) interacts with (6R)-5,10-methylene-5,6,7,8-tetrahydrofolate. A263 serves as a coordination point for (6R)-5,10-methylene-5,6,7,8-tetrahydrofolate.

This sequence belongs to the thymidylate synthase family. Bacterial-type ThyA subfamily. In terms of assembly, homodimer.

The protein resides in the cytoplasm. It carries out the reaction dUMP + (6R)-5,10-methylene-5,6,7,8-tetrahydrofolate = 7,8-dihydrofolate + dTMP. It participates in pyrimidine metabolism; dTTP biosynthesis. Functionally, catalyzes the reductive methylation of 2'-deoxyuridine-5'-monophosphate (dUMP) to 2'-deoxythymidine-5'-monophosphate (dTMP) while utilizing 5,10-methylenetetrahydrofolate (mTHF) as the methyl donor and reductant in the reaction, yielding dihydrofolate (DHF) as a by-product. This enzymatic reaction provides an intracellular de novo source of dTMP, an essential precursor for DNA biosynthesis. The chain is Thymidylate synthase from Hyphomonas neptunium (strain ATCC 15444).